Here is a 133-residue protein sequence, read N- to C-terminus: Holo-[acyl-carrier-protein] synthase (133 aa).

Residues aspartate 8 and glutamate 57 each coordinate Mg(2+).

This sequence belongs to the P-Pant transferase superfamily. AcpS family. Mg(2+) serves as cofactor.

It is found in the cytoplasm. It catalyses the reaction apo-[ACP] + CoA = holo-[ACP] + adenosine 3',5'-bisphosphate + H(+). Transfers the 4'-phosphopantetheine moiety from coenzyme A to a Ser of acyl-carrier-protein. This Bartonella henselae (strain ATCC 49882 / DSM 28221 / CCUG 30454 / Houston 1) (Rochalimaea henselae) protein is Holo-[acyl-carrier-protein] synthase.